We begin with the raw amino-acid sequence, 458 residues long: Argininosuccinate lyase (458 aa).

It belongs to the lyase 1 family. Argininosuccinate lyase subfamily.

It is found in the cytoplasm. The catalysed reaction is 2-(N(omega)-L-arginino)succinate = fumarate + L-arginine. The protein operates within amino-acid biosynthesis; L-arginine biosynthesis; L-arginine from L-ornithine and carbamoyl phosphate: step 3/3. This Salmonella newport (strain SL254) protein is Argininosuccinate lyase.